Here is a 187-residue protein sequence, read N- to C-terminus: Elongation factor P (187 aa).

It belongs to the elongation factor P family.

The protein localises to the cytoplasm. Its pathway is protein biosynthesis; polypeptide chain elongation. Its function is as follows. Involved in peptide bond synthesis. Stimulates efficient translation and peptide-bond synthesis on native or reconstituted 70S ribosomes in vitro. Probably functions indirectly by altering the affinity of the ribosome for aminoacyl-tRNA, thus increasing their reactivity as acceptors for peptidyl transferase. This chain is Elongation factor P, found in Mycolicibacterium vanbaalenii (strain DSM 7251 / JCM 13017 / BCRC 16820 / KCTC 9966 / NRRL B-24157 / PYR-1) (Mycobacterium vanbaalenii).